Consider the following 198-residue polypeptide: Protein RD3-like (198 aa).

Residues 28–57 adopt a coiled-coil conformation; the sequence is KTLLRELKWHLKERERLIQEIENEQKVKKT. The segment at 133–168 is disordered; that stretch reads GSEQEDLEDSGSMDCSAPSVIQGDSSKRADKDEIPT. The segment covering 157–166 has biased composition (basic and acidic residues); it reads SSKRADKDEI.

The polypeptide is Protein RD3-like (RD3L) (Homo sapiens (Human)).